Consider the following 875-residue polypeptide: MSGTKPDILWAPHQVDRFVVCDSELSLYHVESTVNSELKAGSLRLSEDSAATLLSINSDTPYMKCVACYLNYDPECLLAVGQANGRVVLTSLGQDHNSKFKDLIGKEFVPKHARQCNTLAWNPLDNNWLAAGLDKHRADFSVLIWDICSKYTPDIVPMEKVKLSAGETETTLLVTKPLYELGQNDACLSLCWLPRDQKLLLAGMHRNLAIFDLRNTSQKMFVNTKAVQGVTVDPYFHDRVASFYEGQVAIWDLRKFEKPVLTLTEQPKPLTKVAWCPTRTGLLATLTRDSNIIRLYDMQHTPTPIGDETEPTIIERSVQPCDNYIASFAWHPTSQNRMIVVTPNRTMSDFTVFERISLAWSPITSLMWACGRHLYECTEEENDNSLEKDIATKMRLRALSRYGLDTEQVWRNHILAGNEDPQLKSLWYTLHFMKQYTEDMDQKSPGNKGSLVYAGIKSIVKSSLGMVESSRHNWSGLDKQSDIQNLNEERILALQLCGWIKKGTDVDVGPFLNSLVQEGERERAAAVALFNLDIRRAIQILNEGASSEKGDLNLNVVAMALSGYTGEKNSLWREMCSTLRLQLNNPYLCVMFAFLTSETGSYDGVLYENKVAVRDRVAFACKFLSDTQLNRYIEKLTNEMKEAGNLEGILLTGLTKDGVDLMESYVDRTGDVQTASYCMLQGSPLDVLKDERVQYWIENYRNLLDAWRFWHKRAEFDIHRSKLDPSSKPLAQVFVSCNFCGKSISYSCSAVPHQGRGFSQYGVSGSPTKSKVTSCPGCRKPLPRCALCLINTGTPVSSCPGGTKSDEKVDLSKDKKLAQFNNWFTWCHNCRHGGHAGHMLSWFRDHAECPVSACTCKCMQLDTTGNLVPAETVQP.

WD repeat units lie at residues 61 to 100, 111 to 155, 182 to 221, 223 to 261, 265 to 306, and 395 to 437; these read PYMK…NSKF, KHAR…TPDI, GQND…QKMF, NTKA…KPVL, EQPK…TPIG, and RLRA…KQYT. A C4-type zinc finger spans residues 735–781; the sequence is VSCNFCGKSISYSCSAVPHQGRGFSQYGVSGSPTKSKVTSCPGCRKP. C737 and C740 together coordinate Zn(2+). 2 positions are modified to phosphoserine: S759 and S766. Zn(2+)-binding residues include C775, C778, C788, C827, C830, H832, H835, H838, C849, C854, and C858. The segment at 782–863 adopts an RING-type; atypical zinc-finger fold; sequence LPRCALCLIN…CTCKCMQLDT (82 aa).

Belongs to the WD repeat mio family. In terms of assembly, component of the GATOR2 subcomplex, composed of MIOS, SEC13, SEH1L, WDR24 and WDR59. The GATOR2 complex interacts with CASTOR1 and CASTOR2; the interaction is negatively regulated by arginine. CASTOR1 and CASTOR2 convey leucine availability via direct interaction with MIOS. The GATOR2 complex interacts with SESN1, SESN2 and SESN3; the interaction is negatively regulated by amino acids. Interacts with SAR1A and SAR1B; the interaction is direct, disrupted by leucine and mediates the interaction of SAR1A or SAR1B with the GATOR2 complex to negatively regulate the TORC1 signaling upon leucine deprivation.

The protein resides in the lysosome membrane. The GATOR2 complex is negatively regulated by the upstream amino acid sensors CASTOR1 and SESN2, which sequester the GATOR2 complex in absence of amino acids. In the presence of abundant amino acids, GATOR2 is released from CASTOR1 and SESN2 and activated. Its function is as follows. As a component of the GATOR2 complex, functions as an activator of the amino acid-sensing branch of the mTORC1 signaling pathway. The GATOR2 complex indirectly activates mTORC1 through the inhibition of the GATOR1 subcomplex. GATOR2 probably acts as an E3 ubiquitin-protein ligase toward GATOR1. In the presence of abundant amino acids, the GATOR2 complex mediates ubiquitination of the NPRL2 core component of the GATOR1 complex, leading to GATOR1 inactivation. In the absence of amino acids, GATOR2 is inhibited, activating the GATOR1 complex. Within the GATOR2 complex, MIOS is required to prevent autoubiquitination of WDR24, the catalytic subunit of the complex. The GATOR2 complex is required for brain myelination. This chain is GATOR2 complex protein MIOS, found in Pongo abelii (Sumatran orangutan).